The primary structure comprises 115 residues: LSM complex subunit LSM7 (115 aa).

The span at 1–10 shows a compositional bias: basic and acidic residues; the sequence is MHQQHSKSEN. Residues 1–23 are disordered; it reads MHQQHSKSENKPQQQRKKFEGPK. A Sm domain is found at 25-108; the sequence is EAILDLAKYK…LVSLSSAEGS (84 aa).

It belongs to the snRNP Sm proteins family. As to quaternary structure, component of the heptameric LSM1-LSM7 complex that forms a seven-membered ring structure with a donut shape. The LSm subunits are arranged in the order LSM1, LSM2, LSM3, LSM6, LSM5, LSM7 and LSM4. Except for LSM1, where a C-terminal helix crosses the ring structure to form additional interactions with LSM3 and LSM6, each subunit interacts only with its two neighboring subunits. The LSM1-LSM7 complex interacts with PAT1; within the complex PAT1 has direct interactions with LSM2 and LSM3. The LSM1-LSM7 complex interacts with XRN1. Component of the heptameric LSM2-LSM8 complex that forms a seven-membered ring structure with a donut shape; an RNA strand can pass through the hole in the center of the ring structure. The LSm subunits are arranged in the order LSM8, LSM2, LSM3, LSM6, LSM5, LSM7 and LSM4. Component of the spliceosome U4/U6-U5 tri-snRNP complex composed of the U4, U6 and U5 snRNAs and at least PRP3, PRP4, PRP6, PRP8, PRP18, PRP31, PRP38, SNU13, SNU23, SNU66, SNU114, SPP381, SMB1, SMD1, SMD2, SMD3, SMX2, SMX3, LSM2, LSM3, LSM4, LSM5, LSM6, LSM7, LSM8, BRR2 and DIB1. May be found in a complex comprising LSM2-LSM7 without LSM1 or LSM8; the complex associates with pre-P RNA and snoRNA SNR5.

The protein localises to the nucleus. It localises to the nucleolus. The protein resides in the cytoplasm. Component of LSm protein complexes, which are involved in RNA processing and may function in a chaperone-like manner. Component of the cytoplasmic LSM1-LSM7 complex which is involved in mRNA degradation by activating the decapping step. Together with PAT1, the LSM1-LSM7 complex binds to osmotic stress-activated mRNAs to attenuate the osmotic stress response, probably by limiting ribosome access to the mRNA and consequently translation. Component of the nuclear LSM2-LSM8 complex, which is involved in spliceosome assembly. The LSM2-LSM8 complex plays a role in the biogenesis of the spliceosomal U4/U6-U5 tri-snRNP complex by accelerating PRP24-mediated annealing of U4/U6 di-snRNA. The LSM2-LSM8 complex binds U6 snRNA terminating with a non-cyclic 3' phosphate group. LSM2-LSM8 is probably also involved in degradation of nuclear pre-mRNA by targeting them for decapping. LSM2-LSM8 could be involved in processing of pre-tRNAs, pre-rRNAs and U3 snoRNA, although involvement may be indirect. In a complex that probably contains LSM2-LSM7, but not LSM1 or LSM8, associates with the precursor of the RNA component of RNase P (pre-P RNA) and may be involved in maturing pre-P RNA; the complex also associates with snoRNA SNR5. In Saccharomyces cerevisiae (strain ATCC 204508 / S288c) (Baker's yeast), this protein is LSM complex subunit LSM7 (LSM7).